A 335-amino-acid polypeptide reads, in one-letter code: ATP-dependent 6-phosphofructokinase (335 aa).

Glycine 11 serves as a coordination point for ATP. 21-25 serves as a coordination point for ADP; the sequence is RAVVR. ATP is bound by residues 72–73 and 102–105; these read RY and GDGS. Aspartate 103 is a Mg(2+) binding site. Residue 125–127 coordinates substrate; the sequence is TID. The active-site Proton acceptor is the aspartate 127. Arginine 154 is a binding site for ADP. Residues arginine 162 and 169 to 171 contribute to the substrate site; that span reads MGR. Residues 185 to 187 and 213 to 215 each bind ADP; these read GAD and KKH. Substrate-binding positions include glutamate 222, arginine 244, and 250–253; that span reads HIQR.

This sequence belongs to the phosphofructokinase type A (PFKA) family. ATP-dependent PFK group I subfamily. Prokaryotic clade 'B1' sub-subfamily. Homotetramer. It depends on Mg(2+) as a cofactor.

The protein resides in the cytoplasm. It carries out the reaction beta-D-fructose 6-phosphate + ATP = beta-D-fructose 1,6-bisphosphate + ADP + H(+). It participates in carbohydrate degradation; glycolysis; D-glyceraldehyde 3-phosphate and glycerone phosphate from D-glucose: step 3/4. Its activity is regulated as follows. Allosterically activated by ADP and other diphosphonucleosides, and allosterically inhibited by phosphoenolpyruvate. Functionally, catalyzes the phosphorylation of D-fructose 6-phosphate to fructose 1,6-bisphosphate by ATP, the first committing step of glycolysis. The protein is ATP-dependent 6-phosphofructokinase of Streptococcus pneumoniae serotype 4 (strain ATCC BAA-334 / TIGR4).